Consider the following 493-residue polypeptide: Cytochrome P450 2E1 (493 aa).

Substrate is bound at residue 298-303 (FAGTET). Position 437 (Cys437) interacts with heme.

Belongs to the cytochrome P450 family. In terms of assembly, interacts with chaperones HSP70 and HSP90; this interaction is required for initial targeting to mitochondria. Requires heme as cofactor.

Its subcellular location is the endoplasmic reticulum membrane. It localises to the microsome membrane. It is found in the mitochondrion inner membrane. It carries out the reaction an organic molecule + reduced [NADPH--hemoprotein reductase] + O2 = an alcohol + oxidized [NADPH--hemoprotein reductase] + H2O + H(+). The catalysed reaction is (5Z,8Z,11Z)-eicosatrienoate + reduced [NADPH--hemoprotein reductase] + O2 = 19-hydroxy-(5Z,8Z,11Z)-eicosatrienoate + oxidized [NADPH--hemoprotein reductase] + H2O + H(+). The enzyme catalyses (5Z,8Z,11Z,14Z,17Z)-eicosapentaenoate + reduced [NADPH--hemoprotein reductase] + O2 = 19-hydroxy-(5Z,8Z,11Z,14Z,17Z)-eicosapentaenoate + oxidized [NADPH--hemoprotein reductase] + H2O + H(+). It catalyses the reaction (4Z,7Z,10Z,13Z,16Z,19Z)-docosahexaenoate + reduced [NADPH--hemoprotein reductase] + O2 = 21-hydroxy-(4Z,7Z,10Z,13Z,16Z,19Z)-docosahexaenoate + oxidized [NADPH--hemoprotein reductase] + H2O + H(+). It carries out the reaction dodecanoate + reduced [NADPH--hemoprotein reductase] + O2 = 11-hydroxydodecanoate + oxidized [NADPH--hemoprotein reductase] + H2O + H(+). The catalysed reaction is tetradecanoate + reduced [NADPH--hemoprotein reductase] + O2 = 13-hydroxytetradecanoate + oxidized [NADPH--hemoprotein reductase] + H2O + H(+). The enzyme catalyses 4-nitrophenol + NADPH + O2 + H(+) = 4-nitrocatechol + NADP(+) + H2O. The protein operates within lipid metabolism; fatty acid metabolism. Its activity is regulated as follows. The omega-1 hydroxylase activity is stimulated by cytochrome b5. In terms of biological role, a cytochrome P450 monooxygenase involved in the metabolism of fatty acids. Mechanistically, uses molecular oxygen inserting one oxygen atom into a substrate, and reducing the second into a water molecule, with two electrons provided by NADPH via cytochrome P450 reductase (NADPH--hemoprotein reductase). Catalyzes the hydroxylation of carbon-hydrogen bonds. Hydroxylates fatty acids specifically at the omega-1 position displaying the highest catalytic activity for saturated fatty acids. May be involved in the oxidative metabolism of xenobiotics. This chain is Cytochrome P450 2E1 (CYP2E1), found in Mesocricetus auratus (Golden hamster).